A 264-amino-acid chain; its full sequence is Ribosomal RNA small subunit methyltransferase A (264 aa).

S-adenosyl-L-methionine-binding residues include N12, L14, G39, E60, D83, and N103.

Belongs to the class I-like SAM-binding methyltransferase superfamily. rRNA adenine N(6)-methyltransferase family. RsmA subfamily.

The protein resides in the cytoplasm. It carries out the reaction adenosine(1518)/adenosine(1519) in 16S rRNA + 4 S-adenosyl-L-methionine = N(6)-dimethyladenosine(1518)/N(6)-dimethyladenosine(1519) in 16S rRNA + 4 S-adenosyl-L-homocysteine + 4 H(+). Its function is as follows. Specifically dimethylates two adjacent adenosines (A1518 and A1519) in the loop of a conserved hairpin near the 3'-end of 16S rRNA in the 30S particle. May play a critical role in biogenesis of 30S subunits. This Syntrophotalea carbinolica (strain DSM 2380 / NBRC 103641 / GraBd1) (Pelobacter carbinolicus) protein is Ribosomal RNA small subunit methyltransferase A.